The following is a 419-amino-acid chain: Phosphatidylcholine:ceramide cholinephosphotransferase 1 (419 aa).

One can recognise an SAM domain in the interval 13–76; it reads WSPKKVADWL…LDMIETLKME (64 aa). A Phosphoserine modification is found at S14. 5 helical membrane passes run 142–162, 190–210, 221–241, 282–302, and 310–330; these read LLAF…ISVV, FSIC…QWLL, FFCI…VTTL, MCGD…YLFI, and LWWY…CILL. H291 is an active-site residue. Over 331–419 the chain is Cytoplasmic; the sequence is AHDHYTVDVV…VKYSRLVNDT (89 aa). Catalysis depends on residues H334 and D338.

This sequence belongs to the sphingomyelin synthase family.

It is found in the golgi apparatus membrane. The enzyme catalyses an N-acylsphing-4-enine + a 1,2-diacyl-sn-glycero-3-phosphocholine = a sphingomyelin + a 1,2-diacyl-sn-glycerol. The catalysed reaction is 1-(9Z-octadecenoyl)-2-acyl-sn-3-glycerol + a sphingomyelin = a 1-(9Z-octadecenoyl)-2-acyl-sn-glycero-3-phosphocholine + an N-acylsphing-4-enine. It carries out the reaction N-hexadecanoylsphinganine + a 1,2-diacyl-sn-glycero-3-phosphocholine = N-hexadecanoyl-sphinganine-1-phosphocholine + a 1,2-diacyl-sn-glycerol. It catalyses the reaction N-hexadecanoyl-(4R)-hydroxysphinganine + a 1,2-diacyl-sn-glycero-3-phosphocholine = N-hexadecanoyl-(4R)-hydroxysphinganine-phosphocholine + a 1,2-diacyl-sn-glycerol. The enzyme catalyses an N-acylsphing-4-enine + a 1,2-diacyl-sn-glycero-3-phosphoethanolamine = an N-acylsphing-4-enine 1-phosphoethanolamine + a 1,2-diacyl-sn-glycerol. It functions in the pathway sphingolipid metabolism. Its function is as follows. Major sphingomyelin synthase at the Golgi apparatus. Catalyzes the reversible transfer of phosphocholine moiety in sphingomyelin biosynthesis: in the forward reaction transfers phosphocholine head group of phosphatidylcholine (PC) on to ceramide (CER) to form ceramide phosphocholine (sphingomyelin, SM) and diacylglycerol (DAG) as by-product, and in the reverse reaction transfers phosphocholine from SM to DAG to form PC and CER. The direction of the reaction depends on the levels of CER and DAG in Golgi membranes. Converts the newly synthesized CER, that is transported from the endoplasmic reticulum to the trans-Golgi by the Cer transport protein (CERT), to SM. Can form a heteromeric complex with glucosylceramide synthase (GCS) increasing SMS activity and reducing glucosylceramide synthesis, a critical mechanism that controls the metabolic fate of CER in the Golgi. Does not use free phosphorylcholine or CDP-choline as donor. Can also transfer phosphoethanolamine head group of phosphatidylethanolamine (PE) on to CER to form ceramide phosphoethanolamine (CPE). Regulates receptor-mediated signal transduction via mitogenic DAG and proapoptotic CER, as well as via SM, a structural component of membrane rafts that serve as platforms for signal transduction and protein sorting. Plays a role in secretory transport via regulation of DAG pool at the Golgi apparatus and its downstream effects on PRKD1. The protein is Phosphatidylcholine:ceramide cholinephosphotransferase 1 (Sgms1) of Rattus norvegicus (Rat).